A 435-amino-acid chain; its full sequence is Nematode resistance protein-like HSPRO2 (435 aa).

In terms of assembly, interacts with SNF4.

It is found in the cytoplasm. Its function is as follows. Positive regulator of basal resistance. This chain is Nematode resistance protein-like HSPRO2 (HSPRO2), found in Arabidopsis thaliana (Mouse-ear cress).